A 159-amino-acid polypeptide reads, in one-letter code: Ribosomal RNA large subunit methyltransferase H (159 aa).

S-adenosyl-L-methionine is bound by residues Ile-75, Gly-108, and 127-132 (FGRMTL).

Belongs to the RNA methyltransferase RlmH family. As to quaternary structure, homodimer.

Its subcellular location is the cytoplasm. It catalyses the reaction pseudouridine(1915) in 23S rRNA + S-adenosyl-L-methionine = N(3)-methylpseudouridine(1915) in 23S rRNA + S-adenosyl-L-homocysteine + H(+). In terms of biological role, specifically methylates the pseudouridine at position 1915 (m3Psi1915) in 23S rRNA. This is Ribosomal RNA large subunit methyltransferase H from Lactococcus lactis subsp. lactis (strain IL1403) (Streptococcus lactis).